The primary structure comprises 182 residues: Small ribosomal subunit protein uS4c (182 aa).

The region spanning 82–143 (MRLDNILFRL…KQRSKALIQN (62 aa)) is the S4 RNA-binding domain.

The protein belongs to the universal ribosomal protein uS4 family. Part of the 30S ribosomal subunit. Contacts protein S5. The interaction surface between S4 and S5 is involved in control of translational fidelity.

It is found in the plastid. It localises to the chloroplast. Its function is as follows. One of the primary rRNA binding proteins, it binds directly to 16S rRNA where it nucleates assembly of the body of the 30S subunit. In terms of biological role, with S5 and S12 plays an important role in translational accuracy. The chain is Small ribosomal subunit protein uS4c (rps4) from Isophysis tasmanica.